A 904-amino-acid polypeptide reads, in one-letter code: MLIKLLTKVFGSRNDRTLRRMQKVVDVINRMEPDIEKLTDTELRAKTDEFRERLAKGEVLENLIPEAFAVVREASKRVFGMRHFDVQLLGGMVLNERCIAEMRTGEGKTLTATLPAYLNALSGRGVHVVTVNDYLAQRDAENNRPLFEFLGLSIGINLPNMTAPAKRAAYAADITYGTNNEFGFDYLRDNMAFSPEERVQRQLHYALVDEVDSILIDEARTPLIISGPAEDSSEMYIRVNKLIPKLIRQEKEDSDSFQGEGHFSVDEKSRQVHLTERGLILIEQMLVEAGIMDEGESLYSPANIMLMHHVTAALRAHVLFTRDVDYIVKDGEVIIVDEHTGRTMQGRRWSDGLHQAVEAKEGVEIQNENQTLASITFQNYFRLYEKLAGMTGTADTEAFEFSSIYKLDTIVVPTNRPMIRKDLADLVYMTEQEKIGAIIEDIRERTANGQPVLVGTISIEKSEVVSAELTKAGIEHKVLNAKFHAMEAEIVSQAGQPGAVTIATNMAGRGTDIVLGGSWQSEIAALEDPTEEQIAAIKAAWQIRHDAVLASGGLHIIGTERHESRRIDNQLRGRAGRQGDAGSSRFYLSMEDALMRIFASDRVSGMMRKLGMKPGEAIEHPWVTKAIANAQRKVESRNFDIRKQLLEYDDVANDQRRAIYSQRNELLDVSDVSETINSIREDVFKTTIDSYIPTQSLEEMWDIEGLEQRLKNDFDLDMPIAKWLEDEPQLHEETLRERILQQAIETYQRKEEVVGIEMMRNFEKGVMLQTLDSLWKEHLAAMDYLRQGIHLRGYAQKDPKQEYKRESFAMFAAMLESLKYEVISVLSKVQVRMPEEVEALEVQRREEAERLARQQQLSHQTDNSALMSEEEVKVANSLERKVGRNDPCPCGSGKKYKQCHGRLQ.

ATP-binding positions include Q87, 105-109 (GEGKT), and D512. Residues 851–870 (LARQQQLSHQTDNSALMSEE) are disordered. Positions 888, 890, 899, and 900 each coordinate Zn(2+).

It belongs to the SecA family. Monomer and homodimer. Part of the essential Sec protein translocation apparatus which comprises SecA, SecYEG and auxiliary proteins SecDF-YajC and YidC. Requires Zn(2+) as cofactor.

The protein resides in the cell inner membrane. It is found in the cytoplasm. The catalysed reaction is ATP + H2O + cellular proteinSide 1 = ADP + phosphate + cellular proteinSide 2.. In terms of biological role, part of the Sec protein translocase complex. Interacts with the SecYEG preprotein conducting channel. Has a central role in coupling the hydrolysis of ATP to the transfer of proteins into and across the cell membrane, serving both as a receptor for the preprotein-SecB complex and as an ATP-driven molecular motor driving the stepwise translocation of polypeptide chains across the membrane. This Yersinia pseudotuberculosis serotype O:1b (strain IP 31758) protein is Protein translocase subunit SecA.